Consider the following 205-residue polypeptide: Dephospho-CoA kinase (205 aa).

The 201-residue stretch at 4 to 204 (VVGLTGGIAS…QYYLTLATQQ (201 aa)) folds into the DPCK domain. 12 to 17 (ASGKTT) serves as a coordination point for ATP.

The protein belongs to the CoaE family.

Its subcellular location is the cytoplasm. The enzyme catalyses 3'-dephospho-CoA + ATP = ADP + CoA + H(+). It participates in cofactor biosynthesis; coenzyme A biosynthesis; CoA from (R)-pantothenate: step 5/5. Catalyzes the phosphorylation of the 3'-hydroxyl group of dephosphocoenzyme A to form coenzyme A. The sequence is that of Dephospho-CoA kinase from Haemophilus ducreyi (strain 35000HP / ATCC 700724).